The sequence spans 179 residues: Ribulose bisphosphate carboxylase small subunit, chloroplastic 2 (179 aa).

The N-terminal 58 residues, Met1–Gln58, are a transit peptide targeting the chloroplast.

The protein belongs to the RuBisCO small chain family. Heterohexadecamer of 8 large and 8 small subunits.

Its subcellular location is the plastid. It is found in the chloroplast. RuBisCO catalyzes two reactions: the carboxylation of D-ribulose 1,5-bisphosphate, the primary event in carbon dioxide fixation, as well as the oxidative fragmentation of the pentose substrate. Both reactions occur simultaneously and in competition at the same active site. Although the small subunit is not catalytic it is essential for maximal activity. This Fritillaria agrestis (Stinkbells) protein is Ribulose bisphosphate carboxylase small subunit, chloroplastic 2.